The primary structure comprises 307 residues: Carbamate kinase (307 aa).

The protein belongs to the carbamate kinase family.

It is found in the cytoplasm. It catalyses the reaction hydrogencarbonate + NH4(+) + ATP = carbamoyl phosphate + ADP + H2O + H(+). The protein operates within metabolic intermediate metabolism; carbamoyl phosphate degradation; CO(2) and NH(3) from carbamoyl phosphate: step 1/1. Its function is as follows. Carbamate kinase involved in the arginine deiminase pathway of fermentative arginine utilization. The chain is Carbamate kinase (arcC) from Halobacterium salinarum (strain ATCC 700922 / JCM 11081 / NRC-1) (Halobacterium halobium).